The primary structure comprises 246 residues: ABC transporter ATP-binding protein NatA (246 aa).

One can recognise an ABC transporter domain in the interval 2–237 (ITLTDCSRRF…ERSEDLNYIF (236 aa)). Residue 38 to 45 (GENGAGKT) participates in ATP binding.

The protein belongs to the ABC transporter superfamily. As to quaternary structure, the complex is composed of NatA and NatB.

It catalyses the reaction Na(+)(in) + ATP + H2O = Na(+)(out) + ADP + phosphate + H(+). In terms of biological role, part of an ABC transporter that catalyzes ATP-dependent electrogenic sodium extrusion. The sequence is that of ABC transporter ATP-binding protein NatA from Bacillus subtilis (strain 168).